Consider the following 102-residue polypeptide: 10 kDa heat shock protein, mitochondrial (102 aa).

N-acetylalanine is present on Ala-2. Lys-8 carries the post-translational modification N6-acetyllysine. Lys-28 carries the N6-succinyllysine modification. Lys-40 is modified (N6-acetyllysine; alternate). 3 positions are modified to N6-malonyllysine; alternate: Lys-40, Lys-54, and Lys-56. N6-succinyllysine; alternate is present on residues Lys-40, Lys-54, Lys-56, Lys-66, and Lys-70. 3 positions are modified to N6-acetyllysine; alternate: Lys-56, Lys-66, and Lys-70. Thr-79 carries the phosphothreonine modification. Residues Lys-80 and Lys-86 each carry the N6-acetyllysine; alternate modification. Residues Lys-80 and Lys-86 each carry the N6-succinyllysine; alternate modification. Position 99 is an N6-acetyllysine (Lys-99).

This sequence belongs to the GroES chaperonin family. Homoheptamer arranged in a ring structure. 2 heptameric Hsp10 rings interact with a Hsp60 tetradecamer in the structure of a back-to-back double heptameric ring to form the symmetrical football complex.

It localises to the mitochondrion matrix. Co-chaperonin implicated in mitochondrial protein import and macromolecular assembly. Together with Hsp60, facilitates the correct folding of imported proteins. May also prevent misfolding and promote the refolding and proper assembly of unfolded polypeptides generated under stress conditions in the mitochondrial matrix. The functional units of these chaperonins consist of heptameric rings of the large subunit Hsp60, which function as a back-to-back double ring. In a cyclic reaction, Hsp60 ring complexes bind one unfolded substrate protein per ring, followed by the binding of ATP and association with 2 heptameric rings of the co-chaperonin Hsp10. This leads to sequestration of the substrate protein in the inner cavity of Hsp60 where, for a certain period of time, it can fold undisturbed by other cell components. Synchronous hydrolysis of ATP in all Hsp60 subunits results in the dissociation of the chaperonin rings and the release of ADP and the folded substrate protein. In Rattus norvegicus (Rat), this protein is 10 kDa heat shock protein, mitochondrial (Hspe1).